Reading from the N-terminus, the 111-residue chain is MIWLTLVFASLLSVAGQLCQKQATCFATVNKRRKHIVLWLGLALACLGLAMVLWLLVLQNVPVGIAYPMLSLNFVWVTLAAVKLWHEPVSLRHWCGVAFIIGGIVILGSTV.

Residues 1–35 (MIWLTLVFASLLSVAGQLCQKQATCFATVNKRRKH) are Cytoplasmic-facing. The chain crosses the membrane as a helical span at residues 36 to 56 (IVLWLGLALACLGLAMVLWLL). The EamA domain occupies 40–109 (LGLALACLGL…IIGGIVILGS (70 aa)). Residues 57 to 60 (VLQN) lie on the Periplasmic side of the membrane. A helical membrane pass occupies residues 61–81 (VPVGIAYPMLSLNFVWVTLAA). At 82-87 (VKLWHE) the chain is on the cytoplasmic side. A helical transmembrane segment spans residues 88 to 108 (PVSLRHWCGVAFIIGGIVILG). Residues 109 to 111 (STV) lie on the Periplasmic side of the membrane.

Belongs to the ArnE family. In terms of assembly, heterodimer of ArnE and ArnF.

The protein localises to the cell inner membrane. The protein operates within bacterial outer membrane biogenesis; lipopolysaccharide biosynthesis. Translocates 4-amino-4-deoxy-L-arabinose-phosphoundecaprenol (alpha-L-Ara4N-phosphoundecaprenol) from the cytoplasmic to the periplasmic side of the inner membrane. The protein is Probable 4-amino-4-deoxy-L-arabinose-phosphoundecaprenol flippase subunit ArnE of Escherichia coli O6:H1 (strain CFT073 / ATCC 700928 / UPEC).